The sequence spans 394 residues: Acetate kinase (394 aa).

N10 is a binding site for Mg(2+). K17 contributes to the ATP binding site. R87 provides a ligand contact to substrate. Residue D144 is the Proton donor/acceptor of the active site. Residues 204-208 (HLGNG), 279-281 (DMR), and 327-331 (GIGEN) each bind ATP. Residue E381 coordinates Mg(2+).

This sequence belongs to the acetokinase family. In terms of assembly, homodimer. Requires Mg(2+) as cofactor. It depends on Mn(2+) as a cofactor.

It localises to the cytoplasm. It carries out the reaction acetate + ATP = acetyl phosphate + ADP. It functions in the pathway metabolic intermediate biosynthesis; acetyl-CoA biosynthesis; acetyl-CoA from acetate: step 1/2. Its function is as follows. Catalyzes the formation of acetyl phosphate from acetate and ATP. Can also catalyze the reverse reaction. This is Acetate kinase from Ectopseudomonas mendocina (strain ymp) (Pseudomonas mendocina).